A 252-amino-acid chain; its full sequence is 3-deoxy-manno-octulosonate cytidylyltransferase (252 aa).

Belongs to the KdsB family.

The protein resides in the cytoplasm. The catalysed reaction is 3-deoxy-alpha-D-manno-oct-2-ulosonate + CTP = CMP-3-deoxy-beta-D-manno-octulosonate + diphosphate. It participates in nucleotide-sugar biosynthesis; CMP-3-deoxy-D-manno-octulosonate biosynthesis; CMP-3-deoxy-D-manno-octulosonate from 3-deoxy-D-manno-octulosonate and CTP: step 1/1. Its pathway is bacterial outer membrane biogenesis; lipopolysaccharide biosynthesis. Activates KDO (a required 8-carbon sugar) for incorporation into bacterial lipopolysaccharide in Gram-negative bacteria. This is 3-deoxy-manno-octulosonate cytidylyltransferase from Vibrio cholerae serotype O1 (strain ATCC 39315 / El Tor Inaba N16961).